A 393-amino-acid chain; its full sequence is NAD(P)H-quinone oxidoreductase subunit H, chloroplastic (393 aa).

This sequence belongs to the complex I 49 kDa subunit family. In terms of assembly, NDH is composed of at least 16 different subunits, 5 of which are encoded in the nucleus.

The protein localises to the plastid. Its subcellular location is the chloroplast thylakoid membrane. The enzyme catalyses a plastoquinone + NADH + (n+1) H(+)(in) = a plastoquinol + NAD(+) + n H(+)(out). The catalysed reaction is a plastoquinone + NADPH + (n+1) H(+)(in) = a plastoquinol + NADP(+) + n H(+)(out). Functionally, NDH shuttles electrons from NAD(P)H:plastoquinone, via FMN and iron-sulfur (Fe-S) centers, to quinones in the photosynthetic chain and possibly in a chloroplast respiratory chain. The immediate electron acceptor for the enzyme in this species is believed to be plastoquinone. Couples the redox reaction to proton translocation, and thus conserves the redox energy in a proton gradient. The chain is NAD(P)H-quinone oxidoreductase subunit H, chloroplastic from Psilotum nudum (Whisk fern).